We begin with the raw amino-acid sequence, 346 residues long: Enkurin domain-containing protein 1 (346 aa).

The segment at 1-35 (MCEGPSRISGPIPPDPTLCPDNYRRPTSAQGRLEG) is disordered. S91 is modified (phosphoserine). The interval 91–171 (SLKRKDPKDH…AHFLRAHSRC (81 aa)) is required for binding to microtubules. Residues 114 to 125 (RFREQERSREQG) are compositionally biased toward basic and acidic residues. 3 disordered regions span residues 114 to 137 (RFRE…WRSP), 167 to 197 (AHSR…EPGL), and 260 to 280 (AEAR…TRMP). S136 carries the phosphoserine modification. The segment covering 174–190 (GLPPPHVSSPQPTPPGP) has biased composition (pro residues). Residues 251 to 343 (ERRDLWRREA…IFSRPKVFVK (93 aa)) form the Enkurin domain.

In terms of assembly, interacts with alpha-tubulin. Interacts (via central region) with CCP110 (via N-terminal region); competes with CEP97 for binding to CCP110.

The protein localises to the cytoplasm. It localises to the cytoskeleton. The protein resides in the microtubule organizing center. It is found in the centrosome. Its subcellular location is the centriole. The protein localises to the cilium basal body. It localises to the cell projection. The protein resides in the cilium. It is found in the spindle. Its subcellular location is the spindle pole. The protein localises to the cilium axoneme. Functionally, microtubule-binding protein which regulates microtubule organization and stability. Promotes the stability of astral microtubules and facilitates the proper orientation of the mitotic spindle. This allows the oriented division of basal keratinocytes and contributes to epidermal stratification. Required for the assembly of both primary and motile cilia. Destabilizes the interaction between CCP110 and CEP97 by competing with CEP97 for binding to CCP110 which promotes the removal of CCP110 and CEP97 from the mother centriole and allows the initiation of ciliogenesis. This chain is Enkurin domain-containing protein 1 (ENKD1), found in Homo sapiens (Human).